The primary structure comprises 534 residues: Prolyl 4-hydroxylase subunit alpha-1 (534 aa).

The signal sequence occupies residues M1–A17. N113 carries N-linked (GlcNAc...) asparagine glycosylation. A TPR repeat occupies V205–H238. A glycan (N-linked (GlcNAc...) asparagine) is linked at N259. A Fe2OG dioxygenase domain is found at T411–E519. Positions 429, 431, and 500 each coordinate Fe cation. K510 contacts 2-oxoglutarate.

It belongs to the P4HA family. In terms of assembly, heterotetramer of two alpha-1 chains and two beta chains (P4HB)(the beta chain is the multi-functional PDI), where P4HB plays the role of a structural subunit; this tetramer catalyzes the formation of 4-hydroxyproline in collagen. Requires Fe(2+) as cofactor. It depends on L-ascorbate as a cofactor. In terms of tissue distribution, expressed in the heart, liver, skeletal muscle, kidney, placenta, lung and pancreas.

It is found in the endoplasmic reticulum lumen. It catalyses the reaction L-prolyl-[collagen] + 2-oxoglutarate + O2 = trans-4-hydroxy-L-prolyl-[collagen] + succinate + CO2. Its activity is regulated as follows. Inhibited by poly(L-proline). Catalyzes the post-translational formation of 4-hydroxyproline in -Xaa-Pro-Gly- sequences in collagens and other proteins. In Homo sapiens (Human), this protein is Prolyl 4-hydroxylase subunit alpha-1 (P4HA1).